The sequence spans 88 residues: Small ribosomal subunit protein bS20 (88 aa).

Residues M1–R20 form a disordered region.

The protein belongs to the bacterial ribosomal protein bS20 family.

Functionally, binds directly to 16S ribosomal RNA. This Phytoplasma australiense protein is Small ribosomal subunit protein bS20.